We begin with the raw amino-acid sequence, 362 residues long: Class I histocompatibility antigen, Gogo-B*0101 alpha chain (362 aa).

An N-terminal signal peptide occupies residues 1–24 (MRVTAPRTLLLLLSAALALTETWA). Positions 25-114 (GSHSMRYFDT…ALRYYNQSEA (90 aa)) are alpha-1. The Extracellular segment spans residues 25-308 (GSHSMRYFDT…EPSSQSTIPI (284 aa)). An N-linked (GlcNAc...) asparagine glycan is attached at asparagine 110. The interval 115-206 (GSHTIQRMFG…ENGRETLQRA (92 aa)) is alpha-2. 2 disulfide bridges follow: cysteine 125/cysteine 188 and cysteine 227/cysteine 283. The interval 207–298 (DTPKTHVTHH…GLPKPLTLRW (92 aa)) is alpha-3. The 87-residue stretch at 209–295 (PKTHVTHHPI…QHEGLPKPLT (87 aa)) folds into the Ig-like C1-type domain. Residues 299 to 308 (EPSSQSTIPI) form a connecting peptide region. The chain crosses the membrane as a helical span at residues 309–332 (VGIVAGLAVLAVVVIGAVVTAVIC). Topologically, residues 333-362 (RRKSSGGKGGSYSQAASSDSAQGSDVSLTA) are cytoplasmic. Residues 335 to 362 (KSSGGKGGSYSQAASSDSAQGSDVSLTA) are disordered. A compositionally biased stretch (low complexity) spans 343 to 362 (SYSQAASSDSAQGSDVSLTA). Phosphoserine occurs at positions 356 and 359.

The protein belongs to the MHC class I family. Heterodimer of an alpha chain and a beta chain (beta-2-microglobulin).

It is found in the membrane. Functionally, involved in the presentation of foreign antigens to the immune system. The chain is Class I histocompatibility antigen, Gogo-B*0101 alpha chain from Gorilla gorilla gorilla (Western lowland gorilla).